The primary structure comprises 1230 residues: Myosin-1 (1230 aa).

Residues 1–32 are disordered; sequence MGISRRPKADKNASAADSAPGGKPNIQKAQFD. The region spanning 39–713 is the Myosin motor domain; it reads VGVSDLTLIS…TLFALEHMRD (675 aa). 132–139 provides a ligand contact to ATP; it reads GESGAGKT. Residues 403 to 485 are actin-binding; sequence SIGILDIYGF…PGVFSAMKDA (83 aa). 2 consecutive IQ domains span residues 717-737 and 738-763; these read HNMAARIQRVWRAFLQIRIEA and ATRIQRMFRKKREGKEFLELREKGHQ. One can recognise a TH1 domain in the interval 771-961; that stretch reads RRRYSLLGSR…TIHTQAGEPP (191 aa). Disordered stretches follow at residues 945 to 1018, 1033 to 1065, and 1116 to 1230; these read QDHY…AARP, TRNTSVQSTQSTRAVPPPPPPAPPAPPPAPVSK, and AYLE…EDDW. A compositionally biased stretch (polar residues) spans 1033–1045; that stretch reads TRNTSVQSTQSTR. Pro residues-rich tracts occupy residues 1047–1062 and 1122–1142; these read VPPPPPPAPPAPPPAP and TPPPPPPVATRPAPPPAPGPP. The SH3 domain occupies 1064 to 1123; that stretch reads SKEPQYRVLYEFAGQSANEFSLKQGEIVTVLQKETNGWWLTKNVRGQGWAPTAYLEEVTP. Low complexity predominate over residues 1179–1214; the sequence is RDSGMSISSNGSGNNSGRSTPTPSLAGGLAEALRAR.

This sequence belongs to the TRAFAC class myosin-kinesin ATPase superfamily. Myosin family.

It localises to the cytoplasm. It is found in the cytoskeleton. Its subcellular location is the actin patch. Type-I myosin implicated in the organization of the actin cytoskeleton. Required for proper actin cytoskeleton polarization. At the cell cortex, assembles in patch-like structures together with proteins from the actin-polymerizing machinery and promotes actin assembly. Functions as actin nucleation-promoting factor (NPF) for the Arp2/3 complex. This Sclerotinia sclerotiorum (strain ATCC 18683 / 1980 / Ss-1) (White mold) protein is Myosin-1 (myoA).